The sequence spans 220 residues: Deoxyribose-phosphate aldolase 1 (220 aa).

D89 functions as the Proton donor/acceptor in the catalytic mechanism. Residue K151 is the Schiff-base intermediate with acetaldehyde of the active site. The active-site Proton donor/acceptor is K180.

This sequence belongs to the DeoC/FbaB aldolase family. DeoC type 1 subfamily.

The protein localises to the cytoplasm. It carries out the reaction 2-deoxy-D-ribose 5-phosphate = D-glyceraldehyde 3-phosphate + acetaldehyde. The protein operates within carbohydrate degradation; 2-deoxy-D-ribose 1-phosphate degradation; D-glyceraldehyde 3-phosphate and acetaldehyde from 2-deoxy-alpha-D-ribose 1-phosphate: step 2/2. In terms of biological role, catalyzes a reversible aldol reaction between acetaldehyde and D-glyceraldehyde 3-phosphate to generate 2-deoxy-D-ribose 5-phosphate. The sequence is that of Deoxyribose-phosphate aldolase 1 from Staphylococcus aureus (strain COL).